The chain runs to 294 residues: Cytidine deaminase (294 aa).

2 consecutive CMP/dCMP-type deaminase domains span residues 48 to 168 (DDDA…FGPT) and 187 to 294 (AETD…RVTF). Substrate is bound at residue 89–91 (NME). His-102 serves as a coordination point for Zn(2+). Glu-104 acts as the Proton donor in catalysis. 2 residues coordinate Zn(2+): Cys-129 and Cys-132.

The protein belongs to the cytidine and deoxycytidylate deaminase family. Homodimer. It depends on Zn(2+) as a cofactor.

The catalysed reaction is cytidine + H2O + H(+) = uridine + NH4(+). It carries out the reaction 2'-deoxycytidine + H2O + H(+) = 2'-deoxyuridine + NH4(+). In terms of biological role, this enzyme scavenges exogenous and endogenous cytidine and 2'-deoxycytidine for UMP synthesis. The sequence is that of Cytidine deaminase from Yersinia pseudotuberculosis serotype IB (strain PB1/+).